The sequence spans 129 residues: NADPH-dependent 7-cyano-7-deazaguanine reductase (129 aa).

Cys-34 serves as the catalytic Thioimide intermediate. Catalysis depends on Asp-41, which acts as the Proton donor. Residues Val-56–Leu-58 and His-75–Glu-76 contribute to the substrate site.

It belongs to the GTP cyclohydrolase I family. QueF type 1 subfamily.

Its subcellular location is the cytoplasm. It catalyses the reaction 7-aminomethyl-7-carbaguanine + 2 NADP(+) = 7-cyano-7-deazaguanine + 2 NADPH + 3 H(+). Its pathway is tRNA modification; tRNA-queuosine biosynthesis. Functionally, catalyzes the NADPH-dependent reduction of 7-cyano-7-deazaguanine (preQ0) to 7-aminomethyl-7-deazaguanine (preQ1). This Nitrosococcus oceani (strain ATCC 19707 / BCRC 17464 / JCM 30415 / NCIMB 11848 / C-107) protein is NADPH-dependent 7-cyano-7-deazaguanine reductase.